The sequence spans 160 residues: MAQESWKKEAEETGVHTPEAPILCVNNCGFFGSRMTENMCSKCYRDTVKAKTVATVVEKKPLASLSSTPLVTEVTDGGSGSVADGKQVMEEDTPKPPSNRCLSCRKKVGLTGFKCRCGGTFCSMHRYADSHKCTFDYKQVGREQIAKQNPLVKADKITKI.

An A20-type zinc finger spans residues 18-52 (PEAPILCVNNCGFFGSRMTENMCSKCYRDTVKAKT). The Zn(2+) site is built by Cys-24, Cys-28, Cys-40, and Cys-43. Residues 73 to 94 (EVTDGGSGSVADGKQVMEEDTP) form a disordered region. The AN1-type zinc-finger motif lies at 95-141 (KPPSNRCLSCRKKVGLTGFKCRCGGTFCSMHRYADSHKCTFDYKQVG). Zn(2+) is bound by residues Cys-101, Cys-104, Cys-115, Cys-117, Cys-122, His-125, His-131, and Cys-133.

May be involved in environmental stress response. This is Zinc finger A20 and AN1 domain-containing stress-associated protein 6 (SAP6) from Oryza sativa subsp. japonica (Rice).